The primary structure comprises 278 residues: Small ribosomal subunit biogenesis GTPase RsgA (278 aa).

The 157-residue stretch at 62-218 folds into the CP-type G domain; sequence KNTLVRPKVV…ICDTPGFNVI (157 aa). Residues 112-115 and 162-170 contribute to the GTP site; these read TKND and GQSGVGKSS. The Zn(2+) site is built by C241, C246, H248, and C254.

This sequence belongs to the TRAFAC class YlqF/YawG GTPase family. RsgA subfamily. As to quaternary structure, monomer. Associates with 30S ribosomal subunit, binds 16S rRNA. Zn(2+) serves as cofactor.

The protein localises to the cytoplasm. One of several proteins that assist in the late maturation steps of the functional core of the 30S ribosomal subunit. Helps release RbfA from mature subunits. May play a role in the assembly of ribosomal proteins into the subunit. Circularly permuted GTPase that catalyzes slow GTP hydrolysis, GTPase activity is stimulated by the 30S ribosomal subunit. This Mycoplasma pneumoniae (strain ATCC 29342 / M129 / Subtype 1) (Mycoplasmoides pneumoniae) protein is Small ribosomal subunit biogenesis GTPase RsgA.